The chain runs to 544 residues: Chaperonin GroEL (544 aa).

ATP is bound by residues 29–32, Lys50, 86–90, Gly414, 477–479, and Asp493; these read TLGP, DGTTT, and DAA.

This sequence belongs to the chaperonin (HSP60) family. In terms of assembly, forms a cylinder of 14 subunits composed of two heptameric rings stacked back-to-back. Interacts with the co-chaperonin GroES.

The protein localises to the cytoplasm. It carries out the reaction ATP + H2O + a folded polypeptide = ADP + phosphate + an unfolded polypeptide.. Its function is as follows. Together with its co-chaperonin GroES, plays an essential role in assisting protein folding. The GroEL-GroES system forms a nano-cage that allows encapsulation of the non-native substrate proteins and provides a physical environment optimized to promote and accelerate protein folding. In Hydrogenovibrio crunogenus (strain DSM 25203 / XCL-2) (Thiomicrospira crunogena), this protein is Chaperonin GroEL.